A 148-amino-acid chain; its full sequence is MMVEKVVGNITTLEKRVPHIERVYMRSDDLVKRVKRVVTDHGKEIGIRLKEHQELQDGDILYMDDHNMIVISVLEDDVLTIKPTSMQQMGEIAHQLGNRHLPAQFEGNEMIVQYDYLVEELLQKLSIPFTRENRKMKQAFRPIGHRHE.

It belongs to the UreE family.

Its subcellular location is the cytoplasm. In terms of biological role, involved in urease metallocenter assembly. Binds nickel. Probably functions as a nickel donor during metallocenter assembly. The polypeptide is Urease accessory protein UreE (Bacillus sp. (strain TB-90)).